The primary structure comprises 203 residues: Thymidylate kinase (203 aa).

14–21 serves as a coordination point for ATP; that stretch reads GGEGSGKS.

Belongs to the thymidylate kinase family.

It catalyses the reaction dTMP + ATP = dTDP + ADP. In terms of biological role, phosphorylation of dTMP to form dTDP in both de novo and salvage pathways of dTTP synthesis. The chain is Thymidylate kinase from Rickettsia canadensis (strain McKiel).